The following is a 375-amino-acid chain: Putative prophage phiRv2 integrase (375 aa).

The Core-binding (CB) domain occupies 75-153 (APFGEYAEGW…LLRAIMQTAL (79 aa)). In terms of domain architecture, Tyr recombinase spans 175-364 (HKIRPATLDE…AKGRDREIAA (190 aa)). Active-site residues include R209, H316, R319, and H342. The active-site O-(3'-phospho-DNA)-tyrosine intermediate is the Y351.

It belongs to the 'phage' integrase family.

Its function is as follows. Integrase is necessary for integration of the phage into the host genome by site-specific recombination. In conjunction with excisionase, integrase is also necessary for excision of the prophage from the host genome. In Mycobacterium tuberculosis (strain CDC 1551 / Oshkosh), this protein is Putative prophage phiRv2 integrase.